We begin with the raw amino-acid sequence, 414 residues long: Probable tRNA pseudouridine synthase D (414 aa).

The active-site Nucleophile is Asp-90. The TRUD domain maps to 162–382 (GFPNFFGVQR…SSGDYRIISA (221 aa)).

This sequence belongs to the pseudouridine synthase TruD family.

It carries out the reaction uridine(13) in tRNA = pseudouridine(13) in tRNA. Could be responsible for synthesis of pseudouridine from uracil-13 in transfer RNAs. The polypeptide is Probable tRNA pseudouridine synthase D (Picrophilus torridus (strain ATCC 700027 / DSM 9790 / JCM 10055 / NBRC 100828 / KAW 2/3)).